A 369-amino-acid chain; its full sequence is 3-dehydroquinate synthase (369 aa).

NAD(+)-binding positions include 75–80, 109–113, 133–134, Lys146, Lys155, and 173–176; these read DGEEHK, GVIGD, TT, and TLKT. Residues Glu188, His251, and His268 each coordinate Zn(2+).

This sequence belongs to the sugar phosphate cyclases superfamily. Dehydroquinate synthase family. Co(2+) is required as a cofactor. It depends on Zn(2+) as a cofactor. Requires NAD(+) as cofactor.

It localises to the cytoplasm. It catalyses the reaction 7-phospho-2-dehydro-3-deoxy-D-arabino-heptonate = 3-dehydroquinate + phosphate. It participates in metabolic intermediate biosynthesis; chorismate biosynthesis; chorismate from D-erythrose 4-phosphate and phosphoenolpyruvate: step 2/7. Its function is as follows. Catalyzes the conversion of 3-deoxy-D-arabino-heptulosonate 7-phosphate (DAHP) to dehydroquinate (DHQ). The sequence is that of 3-dehydroquinate synthase from Legionella pneumophila (strain Paris).